A 632-amino-acid chain; its full sequence is Bestrophin homolog 24 (632 aa).

Helical transmembrane passes span Ile28–Val48, Gly83–Ile103, Ile234–Ala254, and Leu271–Ala291. 2 disordered regions span residues Leu491–Phe516 and Glu562–Glu632. A compositionally biased stretch (basic and acidic residues) spans Thr563–Ser602. A compositionally biased stretch (basic residues) spans Pro623–Glu632.

The protein belongs to the anion channel-forming bestrophin (TC 1.A.46) family. Calcium-sensitive chloride channel subfamily. Forms oligomers.

It localises to the cell membrane. Its function is as follows. Forms chloride channels. The protein is Bestrophin homolog 24 (best-24) of Caenorhabditis elegans.